Consider the following 347-residue polypeptide: Quinolinate synthase (347 aa).

His-47 and Ser-68 together coordinate iminosuccinate. Cys-113 is a binding site for [4Fe-4S] cluster. Residues 139-141 (YAN) and Ser-156 each bind iminosuccinate. Cys-200 is a [4Fe-4S] cluster binding site. Iminosuccinate contacts are provided by residues 226–228 (HPE) and Thr-243. Cys-297 provides a ligand contact to [4Fe-4S] cluster.

Belongs to the quinolinate synthase family. Type 1 subfamily. [4Fe-4S] cluster is required as a cofactor.

The protein resides in the cytoplasm. The catalysed reaction is iminosuccinate + dihydroxyacetone phosphate = quinolinate + phosphate + 2 H2O + H(+). It functions in the pathway cofactor biosynthesis; NAD(+) biosynthesis; quinolinate from iminoaspartate: step 1/1. Catalyzes the condensation of iminoaspartate with dihydroxyacetone phosphate to form quinolinate. The chain is Quinolinate synthase from Salmonella choleraesuis (strain SC-B67).